We begin with the raw amino-acid sequence, 503 residues long: Palmitoleoyl-protein carboxylesterase NOTUM (503 aa).

The N-terminal stretch at Met-1–Gly-19 is a signal peptide. A disordered region spans residues Arg-23–Gly-53. Pro residues predominate over residues Pro-33–Pro-43. Ser-88 carries the phosphoserine modification. N-linked (GlcNAc...) asparagine glycosylation is present at Asn-103. Catalysis depends on charge relay system residues Ser-239, Asp-347, and His-396.

It belongs to the pectinacetylesterase family. Notum subfamily. Widely expressed. Expressed in lung, ovary, kidney, liver and brain. Not detected in thymus, heart, spleen, stomach, skeletal muscle and bone marrow.

Its subcellular location is the secreted. The catalysed reaction is [Wnt protein]-O-(9Z)-hexadecenoyl-L-serine + H2O = [Wnt protein]-L-serine + (9Z)-hexadecenoate + H(+). Functionally, carboxylesterase that acts as a key negative regulator of the Wnt signaling pathway by specifically mediating depalmitoleoylation of WNT proteins. Serine palmitoleoylation of WNT proteins is required for efficient binding to frizzled receptors. In Mus musculus (Mouse), this protein is Palmitoleoyl-protein carboxylesterase NOTUM.